A 255-amino-acid chain; its full sequence is Indole-3-glycerol phosphate synthase (255 aa).

Belongs to the TrpC family.

The enzyme catalyses 1-(2-carboxyphenylamino)-1-deoxy-D-ribulose 5-phosphate + H(+) = (1S,2R)-1-C-(indol-3-yl)glycerol 3-phosphate + CO2 + H2O. The protein operates within amino-acid biosynthesis; L-tryptophan biosynthesis; L-tryptophan from chorismate: step 4/5. In Streptococcus thermophilus (strain ATCC BAA-491 / LMD-9), this protein is Indole-3-glycerol phosphate synthase.